A 182-amino-acid polypeptide reads, in one-letter code: UPF0397 protein BCG9842_B2659 (182 aa).

The next 5 membrane-spanning stretches (helical) occupy residues 9-29 (VVAI…GFSI), 40-60 (AILT…IGLI), 71-91 (WGIW…MGLI), 114-134 (ITGL…DIIV), and 142-162 (IVIQ…VLGL).

The protein belongs to the UPF0397 family.

It localises to the cell membrane. This chain is UPF0397 protein BCG9842_B2659, found in Bacillus cereus (strain G9842).